Consider the following 56-residue polypeptide: Large ribosomal subunit protein bL32A (56 aa).

The interval Met-1–Lys-56 is disordered. The segment covering Arg-7 to Lys-20 has biased composition (basic residues). Residues Arg-29 to Met-38 show a composition bias toward basic and acidic residues.

The protein belongs to the bacterial ribosomal protein bL32 family.

This chain is Large ribosomal subunit protein bL32A (rpmF1), found in Listeria innocua serovar 6a (strain ATCC BAA-680 / CLIP 11262).